The following is a 40-amino-acid chain: Lucifensin (40 aa).

Disulfide bonds link cysteine 3–cysteine 30, cysteine 16–cysteine 36, and cysteine 20–cysteine 38.

This sequence belongs to the invertebrate defensin family. Type 1 subfamily. Post-translationally, the disulfide bonds are essential for antimicrobial activity. In terms of tissue distribution, larval fat body, hemolymph and salivary glands (at protein level).

It localises to the secreted. Functionally, shows strong antibacterial activity against the Gram-positive bacterium M.luteus. Also shows antibacterial activity against the Gram-positive bacteria E.fecalis, S.aureus, S.carnosus, S.pneumoniae and S.pyogenes and against a number of methicillin-resistant S.aureus and glycopeptide-intermediate S.aureus isolates. Does not show antibacterial activity against Gram-negative bacteria or antifungal activity against C.utilis. Shows slight antifungal activity against C.albicans. The protein is Lucifensin of Lucilia cuprina (Green bottle fly).